The primary structure comprises 144 residues: Deoxyuridine 5'-triphosphate nucleotidohydrolase (144 aa).

Substrate contacts are provided by residues 63 to 65 (RSG), Asn76, and 80 to 82 (TID).

It belongs to the dUTPase family. Requires Mg(2+) as cofactor.

The catalysed reaction is dUTP + H2O = dUMP + diphosphate + H(+). Its pathway is pyrimidine metabolism; dUMP biosynthesis; dUMP from dCTP (dUTP route): step 2/2. This enzyme is involved in nucleotide metabolism: it produces dUMP, the immediate precursor of thymidine nucleotides and it decreases the intracellular concentration of dUTP so that uracil cannot be incorporated into DNA. This Porphyromonas gingivalis (strain ATCC BAA-308 / W83) protein is Deoxyuridine 5'-triphosphate nucleotidohydrolase.